A 354-amino-acid polypeptide reads, in one-letter code: DNA polymerase IV (354 aa).

Positions 3 to 188 constitute a UmuC domain; that stretch reads VIFVDFDYFF…LDIDEIPGIG (186 aa). Mg(2+) is bound by residues D7 and D105. E106 is a catalytic residue.

Belongs to the DNA polymerase type-Y family. Monomer. It depends on Mg(2+) as a cofactor.

The protein resides in the cytoplasm. The catalysed reaction is DNA(n) + a 2'-deoxyribonucleoside 5'-triphosphate = DNA(n+1) + diphosphate. In terms of biological role, poorly processive, error-prone DNA polymerase involved in untargeted mutagenesis. Copies undamaged DNA at stalled replication forks, which arise in vivo from mismatched or misaligned primer ends. These misaligned primers can be extended by PolIV. Exhibits no 3'-5' exonuclease (proofreading) activity. May be involved in translesional synthesis. In Sulfolobus acidocaldarius (strain ATCC 33909 / DSM 639 / JCM 8929 / NBRC 15157 / NCIMB 11770), this protein is DNA polymerase IV.